A 124-amino-acid chain; its full sequence is U12-barytoxin-Tl1a (124 aa).

The first 20 residues, Met-1–Ala-20, serve as a signal peptide directing secretion. A propeptide spanning residues Asp-21–Arg-78 is cleaved from the precursor. Cystine bridges form between Cys-79–Cys-99, Cys-86–Cys-104, and Cys-98–Cys-118.

Belongs to the neurotoxin 14 (magi-1) family. 04 (ICK-6) subfamily. In terms of tissue distribution, expressed by the venom gland.

The protein localises to the secreted. In terms of biological role, ion channel inhibitor. In Trittame loki (Brush-footed trapdoor spider), this protein is U12-barytoxin-Tl1a.